The primary structure comprises 107 residues: Probable insulin-like peptide beta-type 3 (107 aa).

The signal sequence occupies residues 1–19 (MKLSVVLALFIIFQLGAAS). The propeptide occupies 20 to 55 (LMRNWMFDFEKELEHDYDDSEIGFHNIHSLMARSRR). Intrachain disulfides connect Cys62/Cys90, Cys74/Cys103, Cys78/Cys104, and Cys89/Cys94.

Belongs to the insulin family.

It localises to the secreted. The sequence is that of Probable insulin-like peptide beta-type 3 (ins-3) from Caenorhabditis elegans.